Here is a 373-residue protein sequence, read N- to C-terminus: RNA 3'-terminal phosphate cyclase-like protein (373 aa).

Belongs to the RNA 3'-terminal cyclase family. Type 2 subfamily. Part of the small subunit (SSU) processome, composed of more than 70 proteins and the RNA chaperone small nucleolar RNA (snoRNA) U3. Interacts with BMS1.

The protein localises to the nucleus. Its subcellular location is the nucleolus. As part of the small subunit (SSU) processome, it plays a role in 40S-ribosomal-subunit biogenesis in the early pre-rRNA processing steps at sites A0, A1 and A2 that are required for proper maturation of the 18S RNA. Activates BMS1 by promoting GDP/GTP exchange. Does not have cyclase activity. The chain is RNA 3'-terminal phosphate cyclase-like protein (Rcl1) from Mus musculus (Mouse).